Reading from the N-terminus, the 55-residue chain is Spermatid nuclear transition protein 1 (55 aa).

The segment covering 1–42 has biased composition (basic residues); that stretch reads MSTSRKLKSHGMRRSKSRSPHKGVKRGGSKRKYRKGNLKSRK. The disordered stretch occupies residues 1–55; that stretch reads MSTSRKLKSHGMRRSKSRSPHKGVKRGGSKRKYRKGNLKSRKRGDDANRNYRSHL. Ser9 and Ser40 each carry phosphoserine.

The protein belongs to the nuclear transition protein 1 family. As to expression, expressed by spermatids (at protein level).

The protein resides in the nucleus. It localises to the chromosome. Its function is as follows. Plays a key role in the replacement of histones to protamine in the elongating spermatids of mammals. In condensing spermatids, loaded onto the nucleosomes, where it promotes the recruitment and processing of protamines, which are responsible for histone eviction. The protein is Spermatid nuclear transition protein 1 (TNP1) of Homo sapiens (Human).